The chain runs to 586 residues: Pyruvate kinase (586 aa).

Arginine 32 serves as a coordination point for substrate. Residues asparagine 34, serine 36, aspartate 66, and threonine 67 each contribute to the K(+) site. 34–37 (NFSH) is an ATP binding site. Positions 73 and 156 each coordinate ATP. Glutamate 222 is a binding site for Mg(2+). Substrate-binding residues include glycine 245, aspartate 246, and threonine 278. Aspartate 246 provides a ligand contact to Mg(2+).

Belongs to the pyruvate kinase family. This sequence in the C-terminal section; belongs to the PEP-utilizing enzyme family. The cofactor is Mg(2+). Requires K(+) as cofactor.

It catalyses the reaction pyruvate + ATP = phosphoenolpyruvate + ADP + H(+). It functions in the pathway carbohydrate degradation; glycolysis; pyruvate from D-glyceraldehyde 3-phosphate: step 5/5. The sequence is that of Pyruvate kinase (pyk) from Staphylococcus haemolyticus (strain JCSC1435).